A 33-amino-acid polypeptide reads, in one-letter code: Maurocalcin (33 aa).

3 disulfides stabilise this stretch: Cys3/Cys17, Cys10/Cys21, and Cys16/Cys32. Positions 22-24 are essential for stimulation of [3H]ryanodine binding to RYR; the sequence is KRR.

It belongs to the scorpion calcin family. The non-natural D-maurocalcin (a chiral analog of maurocalcin composed of D-amino acids) completely loses the ability to stimulate [3H]ryanodine binding and calcium release. Its protease resistance, combined with its efficient cell penetration at concentrations devoid of cell toxicity, suggests that it should be an excellent vector for in vivo applications. Expressed by the venom gland.

The protein resides in the secreted. Functionally, this toxin stabilizes ryanodine receptor 1 (RyR1) opening in a long-lasting subconductance state (48%-60% of the full conductance state). Furthermore, it triggers calcium release from sarcoplasmic vesicles (6.6 nM are enough to induce a sharp release, and 60% of the total calcium is released after toxin (100 nM) addition) probably by acting as a cell-penetrating peptide (CPP). In addition, it has been shown to dose-dependently stimulate ryanodine binding to RyR1 (EC(50)=12.5-26.4 nM). It also augments the bell-shaped calcium-[3H]ryanodine binding curve that is maximal at about 10 uM calcium concentration. It binds a different site as ryanodine. It acts synergistically with caffeine. In vivo, intracerebroventricular injection into mice causes death. The protein is Maurocalcin of Scorpio palmatus (Israeli golden scorpion).